Here is a 231-residue protein sequence, read N- to C-terminus: Adenosine 5'-phosphosulfate reductase (231 aa).

Positions 118, 119, 201, and 204 each coordinate [4Fe-4S] cluster. Cysteine 227 (nucleophile; cysteine thiosulfonate intermediate) is an active-site residue.

Belongs to the PAPS reductase family. CysH subfamily. [4Fe-4S] cluster is required as a cofactor.

It is found in the cytoplasm. It carries out the reaction [thioredoxin]-disulfide + sulfite + AMP + 2 H(+) = adenosine 5'-phosphosulfate + [thioredoxin]-dithiol. The protein operates within sulfur metabolism; hydrogen sulfide biosynthesis; sulfite from sulfate. Catalyzes the formation of sulfite from adenosine 5'-phosphosulfate (APS) using thioredoxin as an electron donor. In Halalkalibacterium halodurans (strain ATCC BAA-125 / DSM 18197 / FERM 7344 / JCM 9153 / C-125) (Bacillus halodurans), this protein is Adenosine 5'-phosphosulfate reductase.